We begin with the raw amino-acid sequence, 193 residues long: Putative zinc finger protein 726P1 (193 aa).

A C2H2-type 1; degenerate zinc finger spans residues 18-40 (YKCKKCGKTFNWSSILTNNKKIH). The C2H2-type 2; atypical zinc-finger motif lies at 46–68 (YKCEECGKAFKQHSTLTTHKIIC). The C2H2-type 3; degenerate zinc-finger motif lies at 74–96 (YRCEECGKAFCQPSTLTRYKRMH). The segment at 102–124 (YKCEECGKAFTQFSTLTKHKRIH) adopts a C2H2-type 4 zinc-finger fold. The C2H2-type 5; degenerate zinc-finger motif lies at 130-152 (YKCEESGKAFIWSSGLTEHRRVH). The segment at 158 to 180 (YKCEECGKALIQFSTLTRHKRIH) adopts a C2H2-type 6 zinc-finger fold.

The polypeptide is Putative zinc finger protein 726P1 (ZNF726P1) (Homo sapiens (Human)).